Here is a 249-residue protein sequence, read N- to C-terminus: Precorrin-4 C(11)-methyltransferase (249 aa).

The protein belongs to the precorrin methyltransferase family.

It catalyses the reaction precorrin-4 + S-adenosyl-L-methionine = precorrin-5 + S-adenosyl-L-homocysteine. It functions in the pathway cofactor biosynthesis; adenosylcobalamin biosynthesis; cob(II)yrinate a,c-diamide from precorrin-2 (aerobic route): step 4/10. In terms of biological role, catalyzes the methylation of C-11 in precorrin-4 to form precorrin-5. The polypeptide is Precorrin-4 C(11)-methyltransferase (cobM) (Rhodococcus erythropolis (Arthrobacter picolinophilus)).